Reading from the N-terminus, the 279-residue chain is Urease accessory protein UreD (279 aa).

This sequence belongs to the UreD family. In terms of assembly, ureD, UreF and UreG form a complex that acts as a GTP-hydrolysis-dependent molecular chaperone, activating the urease apoprotein by helping to assemble the nickel containing metallocenter of UreC. The UreE protein probably delivers the nickel.

It is found in the cytoplasm. In terms of biological role, required for maturation of urease via the functional incorporation of the urease nickel metallocenter. This Trichormus variabilis (strain ATCC 29413 / PCC 7937) (Anabaena variabilis) protein is Urease accessory protein UreD.